The primary structure comprises 153 residues: Ribonuclease H (153 aa).

Residues 1–142 (MTPEVVIYTD…ADALARKGLS (142 aa)) form the RNase H type-1 domain. Residues Asp10, Glu48, Asp70, and Asp134 each contribute to the Mg(2+) site.

Belongs to the RNase H family. Monomer. Requires Mg(2+) as cofactor.

It is found in the cytoplasm. The catalysed reaction is Endonucleolytic cleavage to 5'-phosphomonoester.. Its function is as follows. Endonuclease that specifically degrades the RNA of RNA-DNA hybrids. The protein is Ribonuclease H of Phenylobacterium zucineum (strain HLK1).